A 282-amino-acid chain; its full sequence is Probable endonuclease 4 (282 aa).

9 residues coordinate Zn(2+): His71, His111, Glu147, Asp181, His184, His218, Asp231, His233, and Glu263.

Belongs to the AP endonuclease 2 family. The cofactor is Zn(2+).

It catalyses the reaction Endonucleolytic cleavage to 5'-phosphooligonucleotide end-products.. Functionally, endonuclease IV plays a role in DNA repair. It cleaves phosphodiester bonds at apurinic or apyrimidinic (AP) sites, generating a 3'-hydroxyl group and a 5'-terminal sugar phosphate. The sequence is that of Probable endonuclease 4 from Protochlamydia amoebophila (strain UWE25).